The chain runs to 1257 residues: Stromal processing peptidase, chloroplastic (1257 aa).

The transit peptide at 1–142 directs the protein to the chloroplast; that stretch reads MAASTSTSSL…ASVKRVQLPH (142 aa). Position 236 (histidine 236) interacts with Zn(2+). The Proton acceptor role is filled by glutamate 239. Histidine 240 is a Zn(2+) binding site. Glutamate 309 is an active-site residue. Residue glutamate 316 participates in Zn(2+) binding. Positions 1233–1257 are disordered; it reads EEAGEGYPGVLPMGRGLSTMTRPTT.

It belongs to the peptidase M16 family. The cofactor is Zn(2+).

It is found in the plastid. Its subcellular location is the chloroplast stroma. Functionally, cleaves presequences (transit peptides) from chloroplastic protein precursors. Initially recognizes a precursor by binding to the C-terminus of its transit peptide and then removes the transit peptide in a single endoproteolytic step. In a next step, pursues the cleavage of transit peptide to a subfragment form. This chain is Stromal processing peptidase, chloroplastic, found in Pisum sativum (Garden pea).